The chain runs to 21 residues: Sarafotoxin-D (21 aa).

2 disulfide bridges follow: cysteine 1/cysteine 15 and cysteine 3/cysteine 11.

Belongs to the endothelin/sarafotoxin family. Expressed by the venom gland.

Its subcellular location is the secreted. In terms of biological role, vasoconstrictor activity. These toxins cause cardiac arrest probably as a result of coronary vasospasm. May act by displaying agonistic activities towards endothelin-1 and -2 receptors (EDNRA and EDNRB). This Atractaspis engaddensis (Israeli burrowing asp) protein is Sarafotoxin-D.